A 331-amino-acid chain; its full sequence is Probable allantoicase (331 aa).

It belongs to the allantoicase family.

It catalyses the reaction allantoate + H2O = (S)-ureidoglycolate + urea. Its pathway is nitrogen metabolism; (S)-allantoin degradation; (S)-ureidoglycolate from allantoate (aminidohydrolase route): step 1/1. The protein is Probable allantoicase of Pseudomonas fluorescens (strain SBW25).